We begin with the raw amino-acid sequence, 212 residues long: Large ribosomal subunit protein uL3 (212 aa).

The segment at 147–166 is disordered; the sequence is GSTGQNQSPGKVFKGKKMPG. Gln-153 carries the N5-methylglutamine modification.

The protein belongs to the universal ribosomal protein uL3 family. As to quaternary structure, part of the 50S ribosomal subunit. Forms a cluster with proteins L14 and L19. Post-translationally, methylated by PrmB.

Its function is as follows. One of the primary rRNA binding proteins, it binds directly near the 3'-end of the 23S rRNA, where it nucleates assembly of the 50S subunit. The chain is Large ribosomal subunit protein uL3 from Psychrobacter sp. (strain PRwf-1).